A 40-amino-acid polypeptide reads, in one-letter code: TVVSQVILKADDELRYPSSGELKSITEFLQTGEQRVRIAQ.

Belongs to the phycobiliprotein family. In terms of assembly, heterodimer of an alpha and a beta chain. In terms of processing, contains one covalently linked bilin chromophore.

It is found in the cellular thylakoid membrane. Functionally, light-harvesting photosynthetic bile pigment-protein from the phycobiliprotein complex. Allophycocyanin has a maximum absorption at approximately 650 nanometers. This Mastigocladus laminosus (Fischerella sp.) protein is Allophycocyanin alpha-B chain.